We begin with the raw amino-acid sequence, 195 residues long: Ribonuclease HII (195 aa).

Residues 1 to 195 (MICGIDEAGR…SWRTLRYLNT (195 aa)) enclose the RNase H type-2 domain. A divalent metal cation contacts are provided by Asp6, Glu7, and Asp101.

This sequence belongs to the RNase HII family. The cofactor is Mn(2+). It depends on Mg(2+) as a cofactor.

The protein localises to the cytoplasm. The enzyme catalyses Endonucleolytic cleavage to 5'-phosphomonoester.. In terms of biological role, endonuclease that specifically degrades the RNA of RNA-DNA hybrids. The sequence is that of Ribonuclease HII from Pyrobaculum islandicum (strain DSM 4184 / JCM 9189 / GEO3).